The primary structure comprises 28 residues: Cyclotide ltri-A (28 aa).

The cyclopeptide (Gly-Asn) cross-link spans 1–28 (GVACGESCVYLPCFTVGCTCTSSQCFKN). Intrachain disulfides connect cysteine 4–cysteine 18, cysteine 8–cysteine 20, and cysteine 13–cysteine 25.

This sequence belongs to the cyclotide family. Bracelet subfamily. Post-translationally, this is a cyclic peptide.

Functionally, probably participates in a plant defense mechanism. This Leonia triandra protein is Cyclotide ltri-A.